The chain runs to 293 residues: 16S rRNA (guanine(1405)-N(7))-methyltransferase (293 aa).

S-adenosyl-L-methionine is bound by residues F47, 80–82 (HAS), R86, A111, D134, 160–161 (DL), L176, and Q185. Low complexity predominate over residues 258–274 (GRPAPAEGAAEPGATRP). Residues 258–293 (GRPAPAEGAAEPGATRPVVDVPATARPDADRVDPTG) form a disordered region. The span at 284-293 (PDADRVDPTG) shows a compositional bias: basic and acidic residues.

It belongs to the methyltransferase superfamily. Aminoglycoside resistance family.

It carries out the reaction guanosine(1405) in 16S rRNA + S-adenosyl-L-methionine = N(7)-methylguanosine(1405) in 16S rRNA + S-adenosyl-L-homocysteine. Functionally, specifically methylates the N(7) position of guanine 1405 in 16S rRNA. Confers resistance to aminoglycosides. The protein is 16S rRNA (guanine(1405)-N(7))-methyltransferase (fmrO) of Micromonospora olivasterospora.